The sequence spans 404 residues: Probable homogentisate phytyltransferase 1, chloroplastic (404 aa).

The N-terminal 77 residues, 1–77 (MDSLRLRPSL…SHHRIPHRPT (77 aa)), are a transit peptide targeting the chloroplast. Residues 68–96 (SHHRIPHRPTSSSADASGQPLQSSAEAHD) are disordered. Residues 76–92 (PTSSSADASGQPLQSSA) show a composition bias toward polar residues. The next 9 helical transmembrane spans lie at 119 to 139 (TVIG…ENLS), 144 to 164 (LFLT…IYIV), 184 to 204 (LASG…FAAM), 216 to 238 (PLFL…LPFL), 245 to 265 (VVAA…AFFL), 282 to 302 (LIFA…FKDI), 325 to 345 (VFWI…LMGA), 348 to 368 (ACLW…AILW), and 382 to 402 (ITSF…LIPL).

It belongs to the UbiA prenyltransferase family.

The protein resides in the plastid. The protein localises to the chloroplast thylakoid membrane. It catalyses the reaction phytyl diphosphate + homogentisate + H(+) = 2-methyl-6-phytyl-1,4-benzene-1,4-diol + CO2 + diphosphate. Its pathway is cofactor biosynthesis; tocopherol biosynthesis. Its function is as follows. Involved in the synthesis of tocopherol (vitamin E). Catalyzes the condensation of homogentisate and phytyl diphosphate to form dimethylphytylhydroquinone. This chain is Probable homogentisate phytyltransferase 1, chloroplastic (HPT1), found in Oryza sativa subsp. japonica (Rice).